The sequence spans 184 residues: Troponin I, slow skeletal muscle (184 aa).

The residue at position 1 (P1) is an N-acetylproline; partial. The tract at residues 1-45 is involved in binding TNC; it reads PEVERKSKITASRKLLKSLMLAKAKECQQEHEAREAEKVRYLAER. At S55 the chain carries Phosphoserine. Residues 94-115 are involved in binding TNC and actin; that stretch reads LKLKVLDLRGKFKRPPLRRVRV.

This sequence belongs to the troponin I family. As to quaternary structure, binds to actin and tropomyosin. In terms of processing, in the muscle sample, approximately 25% of the chains were blocked. Pro-1 is probably acetylated. The N-terminus is blocked.

Functionally, troponin I is the inhibitory subunit of troponin, the thin filament regulatory complex which confers calcium-sensitivity to striated muscle actomyosin ATPase activity. The sequence is that of Troponin I, slow skeletal muscle (TNNI1) from Oryctolagus cuniculus (Rabbit).